Reading from the N-terminus, the 254-residue chain is Esterase YbfF (254 aa).

Residues serine 89 and histidine 234 contribute to the active site.

Belongs to the DmpD/TodF/XylF esterase family.

In terms of biological role, displays esterase activity toward palmitoyl-CoA, malonyl-CoA and pNP-butyrate. The sequence is that of Esterase YbfF (ybfF) from Escherichia coli (strain K12).